Consider the following 759-residue polypeptide: LPS-assembly protein LptD (759 aa).

The N-terminal stretch at 1 to 22 (MPLPIPRLLIPALLLASGASLA) is a signal peptide.

Belongs to the LptD family. As to quaternary structure, component of the lipopolysaccharide transport and assembly complex. Interacts with LptE and LptA.

The protein resides in the cell outer membrane. Together with LptE, is involved in the assembly of lipopolysaccharide (LPS) at the surface of the outer membrane. The sequence is that of LPS-assembly protein LptD from Alcanivorax borkumensis (strain ATCC 700651 / DSM 11573 / NCIMB 13689 / SK2).